A 286-amino-acid chain; its full sequence is Phosphoribosylaminoimidazole-succinocarboxamide synthase (286 aa).

Belongs to the SAICAR synthetase family.

It catalyses the reaction 5-amino-1-(5-phospho-D-ribosyl)imidazole-4-carboxylate + L-aspartate + ATP = (2S)-2-[5-amino-1-(5-phospho-beta-D-ribosyl)imidazole-4-carboxamido]succinate + ADP + phosphate + 2 H(+). Its pathway is purine metabolism; IMP biosynthesis via de novo pathway; 5-amino-1-(5-phospho-D-ribosyl)imidazole-4-carboxamide from 5-amino-1-(5-phospho-D-ribosyl)imidazole-4-carboxylate: step 1/2. This Pasteurella multocida (strain Pm70) protein is Phosphoribosylaminoimidazole-succinocarboxamide synthase (purC).